Reading from the N-terminus, the 82-residue chain is Large ribosomal subunit protein bL31 (82 aa).

This sequence belongs to the bacterial ribosomal protein bL31 family. Type A subfamily. In terms of assembly, part of the 50S ribosomal subunit.

Its function is as follows. Binds the 23S rRNA. The sequence is that of Large ribosomal subunit protein bL31 from Rippkaea orientalis (strain PCC 8801 / RF-1) (Cyanothece sp. (strain PCC 8801)).